We begin with the raw amino-acid sequence, 308 residues long: Ribosomal RNA large subunit methyltransferase F (308 aa).

The protein belongs to the methyltransferase superfamily. METTL16/RlmF family.

Its subcellular location is the cytoplasm. It carries out the reaction adenosine(1618) in 23S rRNA + S-adenosyl-L-methionine = N(6)-methyladenosine(1618) in 23S rRNA + S-adenosyl-L-homocysteine + H(+). Functionally, specifically methylates the adenine in position 1618 of 23S rRNA. The chain is Ribosomal RNA large subunit methyltransferase F from Escherichia coli O157:H7.